The chain runs to 527 residues: MFEFFMETAPATTTGLPLSAILAIFFSFIIGIVFGGMALFVFRGFIMNRQLRIAQRKATKMLADSKLEAKDVLVEAKREADKTRNSAETELKERRSELAKQENRVIQKTEALDRKLENLEQREQSLTNREKSIDETQSQIEEIRENELKRLEEVANMTTEQAKTSLLEMLEGEMQQETSRRLREWEIKIKAEADEKAREVVSQAIQRCASDVVTETTTNVVPLPSDEMKGRLIGREGRNIRALEQATGVDLIIDDTPEAVTISSFDPVRREVARQALSKLIIDGRIHPARIEEVVTKAKEEVEAAMIASGEQAAYQAGVHGLRPEIIKVMGRLKYRTSYGQNVLQHSIEVAQMSGMIGSELGVNVTLARRAGFLHDIGKAVDRDVEGTHTQIGADMVKQWEKSPEVIKGVAEHHFDTPTVSIWGFIVSAADAISSARPGARRESLENYIKRLKALEEIADSFKGVEKSFAIQAGREVRIMVKPDEIDDLGAMRLARDIVKRIEDGLEYPGQIKVTVIRETRSVDFAK.

The helical transmembrane segment at 21–41 threads the bilayer; that stretch reads ILAIFFSFIIGIVFGGMALFV. Residues 78-97 form a disordered region; it reads READKTRNSAETELKERRSE. Positions 217–302 constitute a KH domain; the sequence is TTNVVPLPSD…EVVTKAKEEV (86 aa). Residues 343–436 form the HD domain; sequence VLQHSIEVAQ…VSAADAISSA (94 aa).

The protein belongs to the RNase Y family.

It localises to the cell membrane. Endoribonuclease that initiates mRNA decay. This is Ribonuclease Y from Dehalococcoides mccartyi (strain ATCC BAA-2100 / JCM 16839 / KCTC 5957 / BAV1).